Reading from the N-terminus, the 295-residue chain is CRISPR system Cmr endoribonuclease Cmr4 (295 aa).

This sequence belongs to the CRISPR system Cmr4 family. As to quaternary structure, forms oligomers in isolation. Part of the type III-B Cmr ribonucleoprotein (RNP) complex, an elongated RNP with Cmr2 and Cmr3 as the base, with Cmr4 and Cmr5 forming a helical core along the mature crRNA (39 or 45 nt in length), while the complex is capped by Cmr6 and Cmr1. The 5' end of the crRNA is bound to Cmr2 and Cmr3, while Cmr6 and a Cmr1 subunit (Cmr1-1 or Cmr1-2) cap the 3' end of the crRNA. The target RNA lies anti-parallel to the crRNA, with its 5' end near Cmr1 and Cmr6 and its 3' end near Cmr2 and Cmr3; major target RNA cleavage occurs nears the junction of Cmr1/Cmr6 and Cmr4/Cmr5, with minor cleavage occurring at 6 nt intervals which coincide with the proposed spacing of Cmr4 subunits. Interacts with Cmr5. Interacts with Cmr2, Cmr3, Cmr5 and Cmr6.

The protein resides in the cytoplasm. CRISPR (clustered regularly interspaced short palindromic repeat), is an adaptive immune system that provides protection against mobile genetic elements (viruses, transposable elements and conjugative plasmids). CRISPR clusters contain sequences complementary to antecedent mobile elements and target invading nucleic acids. CRISPR clusters are transcribed and processed into CRISPR RNA (crRNA), formerly called psiRNA (prokaryotic silencing) in this organism. Part of the Cmr ribonucleoprotein complex which has divalent cation-dependent endoribonuclease activity specific for ssRNA complementary to the crRNA (target RNA), generating 5' hydroxy- and 3' phosphate or 2'-3' cyclic phosphate termini. This is probably the subunit that cleaves the target RNA. Cmr complex does not cleave ssDNA complementary to the crRNA. Cleavage of target RNA is guided by the crRNA; substrate cleavage occurs a fixed distance (14 nt) from the 3' end of the crRNA. In vitro reconstitution shows Cmr1-2 and Cmr5 are not absolutely necessary for target cleavage. This Pyrococcus furiosus (strain ATCC 43587 / DSM 3638 / JCM 8422 / Vc1) protein is CRISPR system Cmr endoribonuclease Cmr4.